The sequence spans 407 residues: S-adenosylmethionine synthase (407 aa).

His19 is a binding site for ATP. Asp21 is a Mg(2+) binding site. Glu47 contributes to the K(+) binding site. L-methionine is bound by residues Glu60 and Gln103. A flexible loop region spans residues 103–113; sequence QSQEIADGVDN. Residues 107 to 134 form a disordered region; that stretch reads IADGVDNSDEARTNGDVEEDDRAGAGDQ. Residues 178–180, Asp258, 264–265, Ala281, and Lys285 each bind ATP; these read DGK and RK. Asp258 is a binding site for L-methionine. Lys289 serves as a coordination point for L-methionine.

The protein belongs to the AdoMet synthase family. As to quaternary structure, homotetramer; dimer of dimers. The cofactor is Mg(2+). Requires K(+) as cofactor.

The protein resides in the cytoplasm. The catalysed reaction is L-methionine + ATP + H2O = S-adenosyl-L-methionine + phosphate + diphosphate. It participates in amino-acid biosynthesis; S-adenosyl-L-methionine biosynthesis; S-adenosyl-L-methionine from L-methionine: step 1/1. Catalyzes the formation of S-adenosylmethionine (AdoMet) from methionine and ATP. The overall synthetic reaction is composed of two sequential steps, AdoMet formation and the subsequent tripolyphosphate hydrolysis which occurs prior to release of AdoMet from the enzyme. The chain is S-adenosylmethionine synthase from Corynebacterium glutamicum (strain ATCC 13032 / DSM 20300 / JCM 1318 / BCRC 11384 / CCUG 27702 / LMG 3730 / NBRC 12168 / NCIMB 10025 / NRRL B-2784 / 534).